Reading from the N-terminus, the 813-residue chain is Ribonuclease R (813 aa).

One can recognise an RNB domain in the interval Arg-260–Ala-587. Lys-544 carries the post-translational modification N6-acetyllysine; by PatZ. Positions Gly-644–Ile-725 constitute an S1 motif domain. A disordered region spans residues Pro-731–Glu-813. Basic and acidic residues-rich tracts occupy residues Thr-737–Lys-749 and Val-761–Lys-774. Residues Thr-775–Ser-791 are compositionally biased toward basic residues. The span at Ala-792–Thr-801 shows a compositional bias: low complexity. Basic residues predominate over residues Lys-802–Glu-813.

It belongs to the RNR ribonuclease family. RNase R subfamily. As to quaternary structure, monomer. Mg(2+) serves as cofactor. In terms of processing, acetylated at Lys-544 by PatZ during exponential growth phase. Acetylation alters RNase R structure and enhances binding of SsrA/tmRNA and SmpB, leading to instability and degradation of RNase R. Not acetylated and stable in stationary phase cells.

It localises to the cytoplasm. The enzyme catalyses Exonucleolytic cleavage in the 3'- to 5'-direction to yield nucleoside 5'-phosphates.. Stimulated by the presence of a monovalent cation. Highly unstable in exponential growth phase. This instability is due to the binding of SsrA/tmRNA and its associated protein SmpB to the C-terminal region of RNase R. In contrast, RNase R becomes stabilized upon entry into stationary phase. The difference in stability between exponential and stationary phase is due to the acetylation of a single lysine residue. Functionally, 3'-5' exoribonuclease that releases 5'-nucleoside monophosphates and is involved in maturation of structured RNAs (rRNAs, tRNAs and SsrA/tmRNA). In stationary phase, involved in the post-transcriptional regulation of ompA mRNA stability. Shortens RNA processively to di- and trinucleotides. In vitro, exhibits helicase activity, which is independent of its RNase activity. RNases 2 and R (rnb and this entry) contribute to rRNA degradation during starvation, while RNase R and PNPase (this entry and pnp) are the major contributors to quality control of rRNA during steady state growth. Required for the expression of virulence genes in enteroinvasive strains of E.coli. The sequence is that of Ribonuclease R (rnr) from Escherichia coli (strain K12).